The following is a 436-amino-acid chain: tRNA(Ile)-lysidine synthase (436 aa).

An ATP-binding site is contributed by 27 to 32; the sequence is SGGVDS.

The protein belongs to the tRNA(Ile)-lysidine synthase family.

The protein localises to the cytoplasm. The enzyme catalyses cytidine(34) in tRNA(Ile2) + L-lysine + ATP = lysidine(34) in tRNA(Ile2) + AMP + diphosphate + H(+). Functionally, ligates lysine onto the cytidine present at position 34 of the AUA codon-specific tRNA(Ile) that contains the anticodon CAU, in an ATP-dependent manner. Cytidine is converted to lysidine, thus changing the amino acid specificity of the tRNA from methionine to isoleucine. The chain is tRNA(Ile)-lysidine synthase from Vibrio vulnificus (strain CMCP6).